A 193-amino-acid polypeptide reads, in one-letter code: NAD(P)H-quinone oxidoreductase subunit I (193 aa).

4Fe-4S ferredoxin-type domains lie at Gly56–Glu85 and Lys96–Glu125. Residues Cys65, Cys68, Cys71, Cys75, Cys105, Cys108, Cys111, and Cys115 each contribute to the [4Fe-4S] cluster site. A disordered region spans residues Asn174 to Glu193. The segment covering Gln184 to Glu193 has biased composition (basic and acidic residues).

It belongs to the complex I 23 kDa subunit family. NDH-1 is composed of at least 11 different subunits. [4Fe-4S] cluster is required as a cofactor.

It is found in the cellular thylakoid membrane. The catalysed reaction is a plastoquinone + NADH + (n+1) H(+)(in) = a plastoquinol + NAD(+) + n H(+)(out). The enzyme catalyses a plastoquinone + NADPH + (n+1) H(+)(in) = a plastoquinol + NADP(+) + n H(+)(out). Its function is as follows. NDH-1 shuttles electrons from an unknown electron donor, via FMN and iron-sulfur (Fe-S) centers, to quinones in the respiratory and/or the photosynthetic chain. The immediate electron acceptor for the enzyme in this species is believed to be plastoquinone. Couples the redox reaction to proton translocation, and thus conserves the redox energy in a proton gradient. The chain is NAD(P)H-quinone oxidoreductase subunit I from Synechocystis sp. (strain ATCC 27184 / PCC 6803 / Kazusa).